A 511-amino-acid polypeptide reads, in one-letter code: Archaeal glutamate synthase [NADPH] (511 aa).

2 4Fe-4S ferredoxin-type domains span residues 15–44 (FMIE…YDEE) and 46–75 (DMMR…VKPH). Positions 24, 27, 30, 34, 55, 58, 61, and 65 each coordinate [4Fe-4S] cluster.

It belongs to the glutamate synthase family. FMN serves as cofactor.

It catalyses the reaction 2 L-glutamate + NADP(+) = L-glutamine + 2-oxoglutarate + NADPH + H(+). This Archaeoglobus fulgidus (strain ATCC 49558 / DSM 4304 / JCM 9628 / NBRC 100126 / VC-16) protein is Archaeal glutamate synthase [NADPH].